The sequence spans 278 residues: 3-methyl-2-oxobutanoate hydroxymethyltransferase (278 aa).

Mg(2+) contacts are provided by aspartate 43 and aspartate 82. 3-methyl-2-oxobutanoate is bound by residues 43-44, aspartate 82, and lysine 112; that span reads DS. Mg(2+) is bound at residue glutamate 114. Glutamate 181 serves as the catalytic Proton acceptor.

This sequence belongs to the PanB family. Homodecamer; pentamer of dimers. The cofactor is Mg(2+).

It is found in the cytoplasm. It carries out the reaction 3-methyl-2-oxobutanoate + (6R)-5,10-methylene-5,6,7,8-tetrahydrofolate + H2O = 2-dehydropantoate + (6S)-5,6,7,8-tetrahydrofolate. The protein operates within cofactor biosynthesis; (R)-pantothenate biosynthesis; (R)-pantoate from 3-methyl-2-oxobutanoate: step 1/2. Functionally, catalyzes the reversible reaction in which hydroxymethyl group from 5,10-methylenetetrahydrofolate is transferred onto alpha-ketoisovalerate to form ketopantoate. The chain is 3-methyl-2-oxobutanoate hydroxymethyltransferase from Desulfitobacterium hafniense (strain DSM 10664 / DCB-2).